The following is a 360-amino-acid chain: DNA replication and repair protein RecF (360 aa).

30 to 37 (GHNGSGKT) lines the ATP pocket.

The protein belongs to the RecF family.

The protein resides in the cytoplasm. The RecF protein is involved in DNA metabolism; it is required for DNA replication and normal SOS inducibility. RecF binds preferentially to single-stranded, linear DNA. It also seems to bind ATP. This chain is DNA replication and repair protein RecF, found in Actinobacillus pleuropneumoniae serotype 5b (strain L20).